The following is a 45-amino-acid chain: Photosystem II reaction center protein K (45 aa).

Positions 1–8 (MITAIIIA) are excised as a propeptide. Residues 23 to 43 (ILPVIPIFFLLLAFVWQAAIG) form a helical membrane-spanning segment.

This sequence belongs to the PsbK family. In terms of assembly, PSII is composed of 1 copy each of membrane proteins PsbA, PsbB, PsbC, PsbD, PsbE, PsbF, PsbH, PsbI, PsbJ, PsbK, PsbL, PsbM, PsbT, PsbX, PsbY, PsbZ, Psb30/Ycf12, at least 3 peripheral proteins of the oxygen-evolving complex and a large number of cofactors. It forms dimeric complexes.

The protein localises to the plastid. It is found in the chloroplast thylakoid membrane. One of the components of the core complex of photosystem II (PSII). PSII is a light-driven water:plastoquinone oxidoreductase that uses light energy to abstract electrons from H(2)O, generating O(2) and a proton gradient subsequently used for ATP formation. It consists of a core antenna complex that captures photons, and an electron transfer chain that converts photonic excitation into a charge separation. In Gracilaria tenuistipitata var. liui (Red alga), this protein is Photosystem II reaction center protein K.